A 196-amino-acid polypeptide reads, in one-letter code: Phosphoheptose isomerase (196 aa).

One can recognise an SIS domain in the interval 33-192 (LIQSLKNGGK…ESECGENGNT (160 aa)). 48 to 50 (NGG) serves as a coordination point for substrate. Zn(2+) is bound by residues histidine 57 and glutamate 61. Substrate contacts are provided by residues glutamate 61, 90 to 91 (ND), 116 to 118 (STS), serine 121, and glutamine 168. Zn(2+) contacts are provided by glutamine 168 and histidine 176.

Belongs to the SIS family. GmhA subfamily. Homotetramer. The cofactor is Zn(2+).

Its subcellular location is the cytoplasm. It carries out the reaction 2 D-sedoheptulose 7-phosphate = D-glycero-alpha-D-manno-heptose 7-phosphate + D-glycero-beta-D-manno-heptose 7-phosphate. Its pathway is carbohydrate biosynthesis; D-glycero-D-manno-heptose 7-phosphate biosynthesis; D-glycero-alpha-D-manno-heptose 7-phosphate and D-glycero-beta-D-manno-heptose 7-phosphate from sedoheptulose 7-phosphate: step 1/1. Functionally, catalyzes the isomerization of sedoheptulose 7-phosphate in D-glycero-D-manno-heptose 7-phosphate. This Helicobacter hepaticus (strain ATCC 51449 / 3B1) protein is Phosphoheptose isomerase.